The following is a 676-amino-acid chain: Solute carrier family 26 member 10 (676 aa).

Residues 1–24 form a disordered region; the sequence is MSGPLASGTCSDPEEVSDLKSPLS. 11 helical membrane passes run 101–121, 124–144, 149–165, 190–210, 226–246, 267–287, 300–320, 353–373, 398–418, 426–446, and 487–507; these read AVAG…FALL, VPPV…SLLG, LSTG…GSVV, VGAA…MFVL, ALTS…LLGL, ALSQ…VLLV, LLTP…LCFT, ILAD…SLAS, ISSL…SLLV, LAGL…RPFF, and IVTW…VGVV. Residues 539-660 enclose the STAS domain; that stretch reads ESRKLLQVPG…VSVQDAAAHA (122 aa).

It belongs to the SLC26A/SulP transporter (TC 2.A.53) family.

The protein localises to the membrane. Functionally, chloride/bicarbonate exchanger. This chain is Solute carrier family 26 member 10 (Slc26a10), found in Mus musculus (Mouse).